The primary structure comprises 327 residues: Phenylalanine--tRNA ligase alpha subunit (327 aa).

Glu252 provides a ligand contact to Mg(2+).

Belongs to the class-II aminoacyl-tRNA synthetase family. Phe-tRNA synthetase alpha subunit type 1 subfamily. In terms of assembly, tetramer of two alpha and two beta subunits. Requires Mg(2+) as cofactor.

Its subcellular location is the cytoplasm. The catalysed reaction is tRNA(Phe) + L-phenylalanine + ATP = L-phenylalanyl-tRNA(Phe) + AMP + diphosphate + H(+). The sequence is that of Phenylalanine--tRNA ligase alpha subunit from Shewanella woodyi (strain ATCC 51908 / MS32).